The following is a 102-amino-acid chain: Acid shock protein (102 aa).

Residues 1-21 form the signal peptide; it reads MKKVLALVVAAAMGLSSAAFA. Residues 22–41 show a composition bias toward low complexity; the sequence is AETATTPAPTATTTKAAPAK. Residues 22 to 58 constitute a propeptide that is removed on maturation; that stretch reads AETATTPAPTATTTKAAPAKTTHHKKQHKAAPAQKAQ. The tract at residues 22–102 is disordered; that stretch reads AETATTPAPT…PAKPAAQPAA (81 aa). Positions 80 to 90 are enriched in basic residues; it reads AAKKHAKKHSH. Residues 91 to 102 are compositionally biased toward low complexity; sequence QQPAKPAAQPAA.

Belongs to the Asr family. Post-translationally, proteolytic processing gives rise to the active protein.

It localises to the periplasm. Its function is as follows. Required for growth and/or survival at acidic conditions. This is Acid shock protein from Escherichia coli O45:K1 (strain S88 / ExPEC).